The chain runs to 508 residues: Photosystem II CP47 reaction center protein (508 aa).

Helical transmembrane passes span 21 to 36 (SVHIMHTALVAGWAGS), 101 to 115 (IVFSGLCFLAAIWHW), 140 to 156 (GIHLFLSGVACFGFGVF), 203 to 218 (IAAGTLGILAGLFHLS), 237 to 252 (VLSSSIAAVFFAAFVV), and 457 to 472 (SFALLFFFGHIWHGAR).

It belongs to the PsbB/PsbC family. PsbB subfamily. As to quaternary structure, PSII is composed of 1 copy each of membrane proteins PsbA, PsbB, PsbC, PsbD, PsbE, PsbF, PsbH, PsbI, PsbJ, PsbK, PsbL, PsbM, PsbT, PsbX, PsbY, PsbZ, Psb30/Ycf12, at least 3 peripheral proteins of the oxygen-evolving complex and a large number of cofactors. It forms dimeric complexes. Requires Binds multiple chlorophylls. PSII binds additional chlorophylls, carotenoids and specific lipids. as cofactor.

The protein localises to the plastid. The protein resides in the chloroplast thylakoid membrane. In terms of biological role, one of the components of the core complex of photosystem II (PSII). It binds chlorophyll and helps catalyze the primary light-induced photochemical processes of PSII. PSII is a light-driven water:plastoquinone oxidoreductase, using light energy to abstract electrons from H(2)O, generating O(2) and a proton gradient subsequently used for ATP formation. This is Photosystem II CP47 reaction center protein from Jasminum nudiflorum (Winter jasmine).